Consider the following 147-residue polypeptide: Small ribosomal subunit protein bS6 (147 aa).

The interval 107–147 (KEGRERKARPARAERRDDTEAEDLSDEEGVEAEDFEEEQGV) is disordered. The segment covering 125–147 (TEAEDLSDEEGVEAEDFEEEQGV) has biased composition (acidic residues).

Belongs to the bacterial ribosomal protein bS6 family.

Binds together with bS18 to 16S ribosomal RNA. This chain is Small ribosomal subunit protein bS6, found in Cellvibrio japonicus (strain Ueda107) (Pseudomonas fluorescens subsp. cellulosa).